We begin with the raw amino-acid sequence, 520 residues long: FNIP repeat-containing protein DDB_G0274063/DDB_G0272642 (520 aa).

Disordered stretches follow at residues 47 to 86 and 100 to 121; these read QQQS…IDNR and NISS…SSSS. Residues 51–84 show a composition bias toward low complexity; the sequence is NNNNNNNNNNNNNNNNNNFINFSNHTNNINNNID. FNIP repeat units follow at residues 242 to 285, 286 to 331, 332 to 406, and 453 to 496; these read YNNN…FGES, FNQD…FGLS, YNQP…FGVQ, and FNQQ…FHNS.

The chain is FNIP repeat-containing protein DDB_G0274063/DDB_G0272642 from Dictyostelium discoideum (Social amoeba).